The following is a 234-amino-acid chain: Carboxy-S-adenosyl-L-methionine synthase (234 aa).

Residues Y35, 60–62, 109–110, N124, and R191 each bind S-adenosyl-L-methionine; these read GCS and DV.

Belongs to the class I-like SAM-binding methyltransferase superfamily. Cx-SAM synthase family. Homodimer.

The enzyme catalyses prephenate + S-adenosyl-L-methionine = carboxy-S-adenosyl-L-methionine + 3-phenylpyruvate + H2O. Functionally, catalyzes the conversion of S-adenosyl-L-methionine (SAM) to carboxy-S-adenosyl-L-methionine (Cx-SAM). The polypeptide is Carboxy-S-adenosyl-L-methionine synthase (Campylobacter curvus (strain 525.92)).